Here is a 111-residue protein sequence, read N- to C-terminus: WAP four-disulfide core domain protein 12 (111 aa).

A signal peptide spans 1 to 23 (MGSSSFLVLMVSLALVTLVAAEG). Residues 27 to 74 (GIEKAGVCPADNIRCFKSDPPQCHTDQDCLGERKCCYLHCGFKCVIPV) form the WAP domain. 4 disulfide bridges follow: cysteine 34–cysteine 62, cysteine 41–cysteine 66, cysteine 49–cysteine 61, and cysteine 55–cysteine 70. Residues 80–111 (GGNKDEDVSGPCPEPGWEAKSPGSSSTGCPQK) are disordered. A compositionally biased stretch (polar residues) spans 101 to 111 (PGSSSTGCPQK).

The protein resides in the secreted. In terms of biological role, antibacterial protein. Putative acid-stable proteinase inhibitor. This chain is WAP four-disulfide core domain protein 12 (WFDC12), found in Macaca mulatta (Rhesus macaque).